Consider the following 84-residue polypeptide: Defensin-like protein 37 (84 aa).

The N-terminal stretch at 1 to 24 is a signal peptide; sequence MAVKLIYLFLFLYIALLISGRTMS. 3 disulfides stabilise this stretch: C46–C67, C52–C79, and C56–C81.

Belongs to the DEFL family.

It is found in the secreted. This is Defensin-like protein 37 (EDA21) from Arabidopsis thaliana (Mouse-ear cress).